A 191-amino-acid chain; its full sequence is Elongation factor P-like protein (191 aa).

This sequence belongs to the elongation factor P family.

This is Elongation factor P-like protein from Shewanella sediminis (strain HAW-EB3).